We begin with the raw amino-acid sequence, 353 residues long: Holliday junction branch migration complex subunit RuvB (353 aa).

The tract at residues 4–185 is large ATPase domain (RuvB-L); it reads ADRLITAAGG…FGIVQRLEFY (182 aa). Residues Ile24, Arg25, Gly66, Lys69, Thr70, Thr71, 132 to 134, Arg175, Tyr185, and Arg222 each bind ATP; that span reads EDF. Thr70 serves as a coordination point for Mg(2+). The small ATPAse domain (RuvB-S) stretch occupies residues 186–256; that stretch reads NIADLSTIVS…TADKALNLLD (71 aa). The interval 259–353 is head domain (RuvB-H); sequence EHGFDHQDRR…DDVVDDPADL (95 aa). Residues Arg295, Arg314, and Arg319 each coordinate DNA.

This sequence belongs to the RuvB family. In terms of assembly, homohexamer. Forms an RuvA(8)-RuvB(12)-Holliday junction (HJ) complex. HJ DNA is sandwiched between 2 RuvA tetramers; dsDNA enters through RuvA and exits via RuvB. An RuvB hexamer assembles on each DNA strand where it exits the tetramer. Each RuvB hexamer is contacted by two RuvA subunits (via domain III) on 2 adjacent RuvB subunits; this complex drives branch migration. In the full resolvosome a probable DNA-RuvA(4)-RuvB(12)-RuvC(2) complex forms which resolves the HJ.

Its subcellular location is the cytoplasm. It carries out the reaction ATP + H2O = ADP + phosphate + H(+). The RuvA-RuvB-RuvC complex processes Holliday junction (HJ) DNA during genetic recombination and DNA repair, while the RuvA-RuvB complex plays an important role in the rescue of blocked DNA replication forks via replication fork reversal (RFR). RuvA specifically binds to HJ cruciform DNA, conferring on it an open structure. The RuvB hexamer acts as an ATP-dependent pump, pulling dsDNA into and through the RuvAB complex. RuvB forms 2 homohexamers on either side of HJ DNA bound by 1 or 2 RuvA tetramers; 4 subunits per hexamer contact DNA at a time. Coordinated motions by a converter formed by DNA-disengaged RuvB subunits stimulates ATP hydrolysis and nucleotide exchange. Immobilization of the converter enables RuvB to convert the ATP-contained energy into a lever motion, pulling 2 nucleotides of DNA out of the RuvA tetramer per ATP hydrolyzed, thus driving DNA branch migration. The RuvB motors rotate together with the DNA substrate, which together with the progressing nucleotide cycle form the mechanistic basis for DNA recombination by continuous HJ branch migration. Branch migration allows RuvC to scan DNA until it finds its consensus sequence, where it cleaves and resolves cruciform DNA. This is Holliday junction branch migration complex subunit RuvB from Pseudomonas savastanoi pv. phaseolicola (strain 1448A / Race 6) (Pseudomonas syringae pv. phaseolicola (strain 1448A / Race 6)).